Here is a 927-residue protein sequence, read N- to C-terminus: MPSSTASSEDAPITSTAWMNWKDVFLKCVQPMLAVVLLLRFSSIVDEAGFTTTIILVFFTFLVSLVTGWSACTVVSRKSSEVGFVKTMLAYSSTEFAISFSIIYLFCLLVATSTFLTSAAEAVLHIFSTFSLELLDGATHDLRLVSSVLSLITLALCMVRNRNARFVRTFIFALTCIAIALQLSSVMFRYGEYQLRRVSDRNAMIPSPPNEEISTIFAQLFPAAMCGLTILNIGSKLQNTAPRGALIAIAVSACFYGAAAMLDYVEFFARTSTSNSTGSAEYNEFLSYIYTTVPMAIVITLACVLSAVSTLKYAAVILQSLGRSNQCRCILWLAKGFGERDIPIRCLLLLSTVQILVSAIGSYDILCIPTTVFYLFAYALFNFYVFLVKLSDPEIPSPPTLLSLAISAACFIASLYTNRHLALFIASIFAISYCSLLYIIRRERNEDGEECPKSMYSSVLEQMHELQQEPDSRRHFHPQILLLSGSPAARPGLVDFAHSITRGKSLLICGYIIPKISNKVEQPMTWTEYLMQQSPCSRSYLLQLKIDKQINDWLRAREVNAFGAAICCTKQAEGANILLQTAGLGRLRPNILMLGYKTGWEKLSKESISEYYGMLSNAFDKQVGVIIFRNEASGFDVTSSIRKNGAPINDDEDLAEYVDSATPKLADQGSQKKDVPRGKLLNTFRKMSMAVNKDLESGGRRSTSSSTRFQVIDKHSISEPDQKIIMAQMFRFRKRIPNARIDVFWLREAGGLTMLAPYLLTQAGSFLEGAHIRVFTKTDGKDNKRINEEQKNMAAILRKFHIDSSDLHILPEFSKPPCKQTYDEFRAKIDKYKVETSSSGEPVDGSFDNNQIFNLREKTRSFLRASELIREHSSDADLIVCTLPSARPEIPSPIYLGWIDMLSRQTPPTCLVRGNQVSMSALRLKFP.

The Cytoplasmic portion of the chain corresponds to 1-23; it reads MPSSTASSEDAPITSTAWMNWKD. A helical membrane pass occupies residues 24–44; it reads VFLKCVQPMLAVVLLLRFSSI. The Extracellular segment spans residues 45 to 53; the sequence is VDEAGFTTT. The chain crosses the membrane as a helical span at residues 54–74; the sequence is IILVFFTFLVSLVTGWSACTV. Topologically, residues 75–95 are cytoplasmic; that stretch reads VSRKSSEVGFVKTMLAYSSTE. The helical transmembrane segment at 96–116 threads the bilayer; it reads FAISFSIIYLFCLLVATSTFL. The Extracellular segment spans residues 117 to 141; the sequence is TSAAEAVLHIFSTFSLELLDGATHD. The chain crosses the membrane as a helical span at residues 142–159; it reads LRLVSSVLSLITLALCMV. Over 160–165 the chain is Cytoplasmic; that stretch reads RNRNAR. Residues 166–186 form a helical membrane-spanning segment; that stretch reads FVRTFIFALTCIAIALQLSSV. The Extracellular portion of the chain corresponds to 187–212; sequence MFRYGEYQLRRVSDRNAMIPSPPNEE. The chain crosses the membrane as a helical span at residues 213 to 233; sequence ISTIFAQLFPAAMCGLTILNI. Residues 234 to 244 lie on the Cytoplasmic side of the membrane; the sequence is GSKLQNTAPRG. Residues 245 to 265 traverse the membrane as a helical segment; the sequence is ALIAIAVSACFYGAAAMLDYV. Residues 266 to 284 lie on the Extracellular side of the membrane; sequence EFFARTSTSNSTGSAEYNE. N-linked (GlcNAc...) asparagine glycosylation is present at asparagine 275. Residues 285–305 traverse the membrane as a helical segment; the sequence is FLSYIYTTVPMAIVITLACVL. Over 306–345 the chain is Cytoplasmic; sequence SAVSTLKYAAVILQSLGRSNQCRCILWLAKGFGERDIPIR. A helical transmembrane segment spans residues 346–366; it reads CLLLLSTVQILVSAIGSYDIL. Position 367 (cysteine 367) is a topological domain, extracellular. The chain crosses the membrane as a helical span at residues 368–388; sequence IPTTVFYLFAYALFNFYVFLV. The Cytoplasmic portion of the chain corresponds to 389–394; sequence KLSDPE. A helical membrane pass occupies residues 395–415; it reads IPSPPTLLSLAISAACFIASL. The Extracellular segment spans residues 416–419; sequence YTNR. A helical membrane pass occupies residues 420-440; that stretch reads HLALFIASIFAISYCSLLYII. Topologically, residues 441–927 are cytoplasmic; it reads RRERNEDGEE…SMSALRLKFP (487 aa).

It belongs to the SLC12A transporter family.

Its subcellular location is the cell membrane. This is Solute carrier family 12 protein B0303.11 from Caenorhabditis elegans.